The primary structure comprises 72 residues: Putative sodium channel toxin Ts18 (72 aa).

Positions M1 to T21 are cleaved as a signal peptide. Intrachain disulfides connect C38/C61, C47/C66, and C51/C68.

This sequence belongs to the long (3 C-C) scorpion toxin superfamily. Expressed by the venom gland.

Its subcellular location is the secreted. Functionally, binds to sodium channels (Nav) and affects the channel activation process. This is Putative sodium channel toxin Ts18 from Tityus serrulatus (Brazilian scorpion).